A 147-amino-acid polypeptide reads, in one-letter code: Probable inactive ribonuclease-like protein 12 (147 aa).

A signal peptide spans 1–20 (MIIMVIIFLVLLFWENEVND).

The protein belongs to the pancreatic ribonuclease family.

The protein localises to the secreted. Its function is as follows. Does not exhibit any ribonuclease activity. This chain is Probable inactive ribonuclease-like protein 12 (RNASE12), found in Homo sapiens (Human).